An 834-amino-acid chain; its full sequence is MSYKPSSEIALRPGYGGLGKQITLKANFFQIISLPNETINQYHVIVGDGSRVPRKQSQLIWNSKEVKQYFGSSWMNSVYDGRSMCWSKGDIADGTIKVNIGSESHPREIEFSIQKSSKINLHTLSQFVNSKYSSDPQVLSSIMFLDLLLKKKPSETLFGFMHSFFTGENGVSLGGGVEAWKGFYQSIRPNQGFMSVNVDISSSAFWRNDSLLQILMEYTDCSNVRDLTRFDLKRLSRKFRFLKVTCQHRNNVGTDLANRVYSIEGFSSKSASDSFFVRRLNGEEQKISVAEYFLENHNVRLQYPNLPCILVKNGAMLPIEFCFVVKGQRYTAKLNSDQTANMIRFAVQRPFERVQQIDDFVHQMDWDTDPYLTQYGMKIQKKMLEVPARVLETPSIRYGGDCIERPVSGRWNLRGKRFLDPPRAPIRSWAVMCFTSTRRLPMRGIENFLQTYVQTLTSLGINFVMKKPPVLYADIRGSVEELCITLYKKAEQVGNAPPDYLFFILDKNSPEPYGSIKRVCNTMLGVPSQCAISKHILQSKPQYCANLGMKINVKVGGINCSLIPKSNPLGNVPTLILGGDVYHPGVGATGVSIASIVASVDLNGCKYTAVSRSQPRHQEVIEGMKDIVVYLLQGFRAMTKQQPQRIIYFRDGTSEGQFLSVINDELSQIKEACHSLSPKYNPKILVCTTQKRHHARFFIKNKSDGDRNGNPLPGTIIEKHVTHPYQYDFYLISHPSLQGVSVPVHYTVLHDEIQMPPDQFQTLCYNLCYVYARATSAVSLVPPVYYAHLVSNLARYQDVTADDTFVETSEASMDQEVKPLLALSSKLKTKMWYM.

Positions 210 to 326 constitute a PAZ domain; that stretch reads SLLQILMEYT…LPIEFCFVVK (117 aa). A Piwi domain is found at 500–799; it reads YLFFILDKNS…VSNLARYQDV (300 aa).

The protein belongs to the argonaute family. Ago subfamily. As to quaternary structure, ago1, chp1 and tas3 interact to form the core of the RNA-induced transcriptional silencing (RITS) complex. The RITS complex interacts with the RDRC complex via interaction between ago1 and hrr1. Clr4 has a role in mediating this interaction. Component of the argonaute siRNA chaperone (ARC) complex composed of ago1, arb1 and arb2. Interacts with arb1.

The protein resides in the cytoplasm. The protein localises to the nucleus. It localises to the chromosome. It is found in the centromere. Its subcellular location is the telomere. In terms of biological role, required for G1 arrest and mating in response to nitrogen starvation. Ago1 regulation of cytokinesis and cell cycle checkpoints occurs downstream of dcr1. Required, indirectly, for regulated hyperphosphorylation of cdc2. Has a role in the RNA interference (RNAi) pathway which is important for heterochromatin formation, accurate chromosome segregation, centromere cohesion and telomere function during mitosis and meiosis. Required for silencing at the centromeres and for initiation of transcriptionally silent heterochromatin at the mating type locus. Promotes histone H3K9 methylation necessary for centromere function. Required for recruitment of swi6 and cohesin to an ectopic dg repeat. A member of the RNA-induced transcriptional silencing (RITS) complex which is involved in the biosynthesis of dsRNA from primer siRNAs provided by the RNA-directed RNA polymerase (RDRC) complex. Has ribonuclease H-like cleavage (slicing) activity towards target messages complementary to siRNA and can direct site-specific cleavage of RNA substrates via siRNA. Slicing activity is required for both post-transcriptional and transcriptional gene silencing as well as for histone H3 'Lys-10' methylation spreading, conversion of double-stranded siRNA to single-stranded siRNA and siRNA-dependent association of ago1 with chromatin. A member of the argonaute siRNA chaperone (ARC) complex which is required for histone H3K9 methylation, heterochromatin assembly and siRNA generation. The ARC complex contains mostly double-stranded siRNA. This is Protein argonaute (ago1) from Schizosaccharomyces pombe (strain 972 / ATCC 24843) (Fission yeast).